The chain runs to 61 residues: Photosystem II reaction center protein K (61 aa).

Positions 1–24 are excised as a propeptide; that stretch reads MLNIFSLIWICLNSALYSSGFFFG. A helical membrane pass occupies residues 36-56; the sequence is IIDFMPVIPVFFFLLAFVWQA.

The protein belongs to the PsbK family. In terms of assembly, PSII is composed of 1 copy each of membrane proteins PsbA, PsbB, PsbC, PsbD, PsbE, PsbF, PsbH, PsbI, PsbJ, PsbK, PsbL, PsbM, PsbT, PsbX, PsbY, PsbZ, Psb30/Ycf12, at least 3 peripheral proteins of the oxygen-evolving complex and a large number of cofactors. It forms dimeric complexes.

It is found in the plastid. Its subcellular location is the chloroplast thylakoid membrane. Functionally, one of the components of the core complex of photosystem II (PSII). PSII is a light-driven water:plastoquinone oxidoreductase that uses light energy to abstract electrons from H(2)O, generating O(2) and a proton gradient subsequently used for ATP formation. It consists of a core antenna complex that captures photons, and an electron transfer chain that converts photonic excitation into a charge separation. The polypeptide is Photosystem II reaction center protein K (Coffea arabica (Arabian coffee)).